A 370-amino-acid polypeptide reads, in one-letter code: Ubiquitin carboxyl-terminal hydrolase 12-B (370 aa).

The region spanning 39–369 (FGLVNFGNTC…SGYILFYQSR (331 aa)) is the USP domain. Catalysis depends on cysteine 48, which acts as the Nucleophile. Residues 145–168 (KQEKQNGRIPNGNIDNENNNNTPD) are disordered. Positions 155 to 165 (NGNIDNENNNN) are enriched in low complexity. Zn(2+) contacts are provided by cysteine 186, cysteine 189, cysteine 233, and cysteine 236. The Proton acceptor role is filled by histidine 317.

Belongs to the peptidase C19 family. USP12/USP46 subfamily. In terms of assembly, interacts with WDR48.

It catalyses the reaction Thiol-dependent hydrolysis of ester, thioester, amide, peptide and isopeptide bonds formed by the C-terminal Gly of ubiquitin (a 76-residue protein attached to proteins as an intracellular targeting signal).. Deubiquitinating enzyme. Has almost no deubiquitinating activity by itself and requires the interaction with wdr48 to have a high activity. The polypeptide is Ubiquitin carboxyl-terminal hydrolase 12-B (usp12-b) (Xenopus laevis (African clawed frog)).